The sequence spans 517 residues: ATP synthase subunit alpha 2 (517 aa).

173–180 lines the ATP pocket; that stretch reads GDRQTGKT.

It belongs to the ATPase alpha/beta chains family. As to quaternary structure, F-type ATPases have 2 components, CF(1) - the catalytic core - and CF(0) - the membrane proton channel. CF(1) has five subunits: alpha(3), beta(3), gamma(1), delta(1), epsilon(1). CF(0) has three main subunits: a(1), b(2) and c(9-12). The alpha and beta chains form an alternating ring which encloses part of the gamma chain. CF(1) is attached to CF(0) by a central stalk formed by the gamma and epsilon chains, while a peripheral stalk is formed by the delta and b chains.

The protein localises to the cell inner membrane. The catalysed reaction is ATP + H2O + 4 H(+)(in) = ADP + phosphate + 5 H(+)(out). Functionally, produces ATP from ADP in the presence of a proton gradient across the membrane. The alpha chain is a regulatory subunit. This chain is ATP synthase subunit alpha 2, found in Legionella pneumophila (strain Corby).